The chain runs to 202 residues: Indolepyruvate oxidoreductase subunit IorB (202 aa).

In terms of assembly, heterodimer of the IorA and IorB subunits.

It catalyses the reaction indole-3-pyruvate + 2 oxidized [2Fe-2S]-[ferredoxin] + CoA = (indol-3-yl)acetyl-CoA + 2 reduced [2Fe-2S]-[ferredoxin] + CO2 + H(+). Functionally, catalyzes the ferredoxin-dependent oxidative decarboxylation of arylpyruvates. The polypeptide is Indolepyruvate oxidoreductase subunit IorB (iorB) (Pyrococcus horikoshii (strain ATCC 700860 / DSM 12428 / JCM 9974 / NBRC 100139 / OT-3)).